We begin with the raw amino-acid sequence, 396 residues long: Ribosomal RNA large subunit methyltransferase I (396 aa).

The 78-residue stretch at 2 to 79 (SVRLVLAKGR…QAESIDIAFF (78 aa)) folds into the PUA domain.

The protein belongs to the methyltransferase superfamily. RlmI family.

The protein resides in the cytoplasm. It catalyses the reaction cytidine(1962) in 23S rRNA + S-adenosyl-L-methionine = 5-methylcytidine(1962) in 23S rRNA + S-adenosyl-L-homocysteine + H(+). Functionally, specifically methylates the cytosine at position 1962 (m5C1962) of 23S rRNA. The sequence is that of Ribosomal RNA large subunit methyltransferase I from Citrobacter koseri (strain ATCC BAA-895 / CDC 4225-83 / SGSC4696).